Reading from the N-terminus, the 318-residue chain is Probable pyridoxal 5'-phosphate synthase subunit PDX1.1 (318 aa).

A D-ribose 5-phosphate-binding site is contributed by Asp-49. The active-site Schiff-base intermediate with D-ribose 5-phosphate is Lys-106. Position 178 (Gly-178) interacts with D-ribose 5-phosphate. Arg-190 provides a ligand contact to D-glyceraldehyde 3-phosphate. D-ribose 5-phosphate-binding positions include Gly-239 and 260-261 (GS).

It belongs to the PdxS/SNZ family.

It catalyses the reaction aldehydo-D-ribose 5-phosphate + D-glyceraldehyde 3-phosphate + L-glutamine = pyridoxal 5'-phosphate + L-glutamate + phosphate + 3 H2O + H(+). It functions in the pathway cofactor biosynthesis; pyridoxal 5'-phosphate biosynthesis. Its function is as follows. Catalyzes the formation of pyridoxal 5'-phosphate from ribose 5-phosphate (RBP), glyceraldehyde 3-phosphate (G3P) and ammonia. The ammonia is provided by PDX2. Can also use ribulose 5-phosphate and dihydroxyacetone phosphate as substrates, resulting from enzyme-catalyzed isomerization of RBP and G3P, respectively. Also plays an indirect role in resistance to singlet oxygen-generating photosensitizers. The protein is Probable pyridoxal 5'-phosphate synthase subunit PDX1.1 (PDX11) of Oryza sativa subsp. japonica (Rice).